Consider the following 92-residue polypeptide: Defensin-like protein 96 (92 aa).

A signal peptide spans 1–29 (MGSLRLSTVAIAVVVCLSILLISPTEVDG). Intrachain disulfides connect Cys-33/Cys-80, Cys-40/Cys-65, Cys-49/Cys-77, and Cys-53/Cys-79.

This sequence belongs to the DEFL family.

It is found in the secreted. In Arabidopsis thaliana (Mouse-ear cress), this protein is Defensin-like protein 96.